Consider the following 235-residue polypeptide: Small ribosomal subunit protein eS4 (235 aa).

Residues Leu37–Glu100 enclose the S4 RNA-binding domain.

This sequence belongs to the eukaryotic ribosomal protein eS4 family.

The sequence is that of Small ribosomal subunit protein eS4 from Methanosarcina acetivorans (strain ATCC 35395 / DSM 2834 / JCM 12185 / C2A).